The primary structure comprises 210 residues: Chaperone protein TorD (210 aa).

The protein belongs to the TorD/DmsD family. TorD subfamily.

It is found in the cytoplasm. In terms of biological role, involved in the biogenesis of TorA. Acts on TorA before the insertion of the molybdenum cofactor and, as a result, probably favors a conformation of the apoenzyme that is competent for acquiring the cofactor. The chain is Chaperone protein TorD from Salmonella dublin (strain CT_02021853).